The primary structure comprises 677 residues: Fermitin family homolog 1 (677 aa).

One can recognise an FERM domain in the interval 96–653 (MLRLRLPNLK…HEYIGGYIFL (558 aa)). Phosphoserine occurs at positions 170, 179, and 361. The 97-residue stretch at 377 to 473 (KLFRPKKLLP…WMAACMLASK (97 aa)) folds into the PH domain.

The protein belongs to the kindlin family. Interacts with the cytoplasmic domain of integrins ITGB1 and ITGB3. In terms of tissue distribution, expressed in brain, skeletal muscle, kidney, colon, adrenal gland, prostate, and placenta. Weakly or not expressed in heart, thymus, spleen, liver, small intestine, bone marrow, lung and peripheral blood leukocytes. Overexpressed in some colon and lung tumors. In skin, it is localized within the epidermis and particularly in basal keratocytes. Not detected in epidermal melanocytes and dermal fibroblasts.

The protein resides in the cytoplasm. It is found in the cytoskeleton. Its subcellular location is the cell junction. The protein localises to the focal adhesion. It localises to the cell projection. The protein resides in the ruffle membrane. Its function is as follows. Involved in cell adhesion. Contributes to integrin activation. When coexpressed with talin, potentiates activation of ITGA2B. Required for normal keratinocyte proliferation. Required for normal polarization of basal keratinocytes in skin, and for normal cell shape. Required for normal adhesion of keratinocytes to fibronectin and laminin, and for normal keratinocyte migration to wound sites. May mediate TGF-beta 1 signaling in tumor progression. The sequence is that of Fermitin family homolog 1 (FERMT1) from Homo sapiens (Human).